Reading from the N-terminus, the 82-residue chain is MSEASSAPVRRPFHRRRKTCPFSGANAPRIDYKDVRLLQRYISERGKIVPSRITAVSQKKQRELAQAIKRARFLGLLPYVVA.

Residues 1 to 20 are disordered; sequence MSEASSAPVRRPFHRRRKTC.

This sequence belongs to the bacterial ribosomal protein bS18 family. In terms of assembly, part of the 30S ribosomal subunit. Forms a tight heterodimer with protein bS6.

Binds as a heterodimer with protein bS6 to the central domain of the 16S rRNA, where it helps stabilize the platform of the 30S subunit. The polypeptide is Small ribosomal subunit protein bS18 (Rhizobium etli (strain CIAT 652)).